The sequence spans 693 residues: Elongation factor G (693 aa).

Positions 8–283 constitute a tr-type G domain; it reads NKVRNFGIAA…AVCDYLPSPL (276 aa). GTP-binding positions include 17-24, 81-85, and 135-138; these read AHIDAGKT, DTPGH, and NKMD.

Belongs to the TRAFAC class translation factor GTPase superfamily. Classic translation factor GTPase family. EF-G/EF-2 subfamily.

The protein localises to the cytoplasm. Catalyzes the GTP-dependent ribosomal translocation step during translation elongation. During this step, the ribosome changes from the pre-translocational (PRE) to the post-translocational (POST) state as the newly formed A-site-bound peptidyl-tRNA and P-site-bound deacylated tRNA move to the P and E sites, respectively. Catalyzes the coordinated movement of the two tRNA molecules, the mRNA and conformational changes in the ribosome. This chain is Elongation factor G, found in Endomicrobium trichonymphae.